The primary structure comprises 100 residues: Aspartyl/glutamyl-tRNA(Asn/Gln) amidotransferase subunit C (100 aa).

Belongs to the GatC family. In terms of assembly, heterotrimer of A, B and C subunits.

The catalysed reaction is L-glutamyl-tRNA(Gln) + L-glutamine + ATP + H2O = L-glutaminyl-tRNA(Gln) + L-glutamate + ADP + phosphate + H(+). The enzyme catalyses L-aspartyl-tRNA(Asn) + L-glutamine + ATP + H2O = L-asparaginyl-tRNA(Asn) + L-glutamate + ADP + phosphate + 2 H(+). Functionally, allows the formation of correctly charged Asn-tRNA(Asn) or Gln-tRNA(Gln) through the transamidation of misacylated Asp-tRNA(Asn) or Glu-tRNA(Gln) in organisms which lack either or both of asparaginyl-tRNA or glutaminyl-tRNA synthetases. The reaction takes place in the presence of glutamine and ATP through an activated phospho-Asp-tRNA(Asn) or phospho-Glu-tRNA(Gln). The protein is Aspartyl/glutamyl-tRNA(Asn/Gln) amidotransferase subunit C of Streptococcus pyogenes serotype M18 (strain MGAS8232).